Reading from the N-terminus, the 245-residue chain is UPF0246 protein Ldb2075 (245 aa).

It belongs to the UPF0246 family.

The chain is UPF0246 protein Ldb2075 from Lactobacillus delbrueckii subsp. bulgaricus (strain ATCC 11842 / DSM 20081 / BCRC 10696 / JCM 1002 / NBRC 13953 / NCIMB 11778 / NCTC 12712 / WDCM 00102 / Lb 14).